We begin with the raw amino-acid sequence, 491 residues long: Chromosomal replication initiator protein DnaA (491 aa).

A domain I, interacts with DnaA modulators region spans residues 1–69; it reads MTTWDKCLKK…TIQECHGNDL (69 aa). The segment at 69–154 is domain II; it reads LIIEYSNKKF…KEDEEYSFGL (86 aa). The segment at 155–371 is domain III, AAA+ region; that stretch reads PLKEKYVFDS…GALNRVLTTS (217 aa). ATP-binding residues include G199, G201, K202, and T203. Residues 372–491 form a domain IV, binds dsDNA region; that stretch reads KFNHKDPTIE…YELLLDKISR (120 aa).

Belongs to the DnaA family. As to quaternary structure, oligomerizes as a right-handed, spiral filament on DNA at oriC.

Its subcellular location is the cytoplasm. Its function is as follows. Plays an essential role in the initiation and regulation of chromosomal replication. ATP-DnaA binds to the origin of replication (oriC) to initiate formation of the DNA replication initiation complex once per cell cycle. Binds the DnaA box (a 9 base pair repeat at the origin) and separates the double-stranded (ds)DNA. Forms a right-handed helical filament on oriC DNA; dsDNA binds to the exterior of the filament while single-stranded (ss)DNA is stabiized in the filament's interior. The ATP-DnaA-oriC complex binds and stabilizes one strand of the AT-rich DNA unwinding element (DUE), permitting loading of DNA polymerase. After initiation quickly degrades to an ADP-DnaA complex that is not apt for DNA replication. Binds acidic phospholipids. The chain is Chromosomal replication initiator protein DnaA from Francisella tularensis subsp. holarctica (strain LVS).